We begin with the raw amino-acid sequence, 510 residues long: NAD(P)H-quinone oxidoreductase subunit 2 B, chloroplastic (510 aa).

A run of 13 helical transmembrane segments spans residues Leu-24 to Leu-44, Ile-57 to Phe-77, Ile-99 to Ile-119, Met-124 to Cys-144, Ile-150 to Thr-170, Tyr-183 to Gly-203, Pro-227 to Ala-247, Trp-295 to Ile-315, Met-323 to Asp-343, Gly-347 to Ala-367, Ala-395 to Phe-415, Leu-418 to Leu-438, and Met-484 to Ile-504.

It belongs to the complex I subunit 2 family. NDH is composed of at least 16 different subunits, 5 of which are encoded in the nucleus.

The protein localises to the plastid. It localises to the chloroplast thylakoid membrane. It catalyses the reaction a plastoquinone + NADH + (n+1) H(+)(in) = a plastoquinol + NAD(+) + n H(+)(out). It carries out the reaction a plastoquinone + NADPH + (n+1) H(+)(in) = a plastoquinol + NADP(+) + n H(+)(out). In terms of biological role, NDH shuttles electrons from NAD(P)H:plastoquinone, via FMN and iron-sulfur (Fe-S) centers, to quinones in the photosynthetic chain and possibly in a chloroplast respiratory chain. The immediate electron acceptor for the enzyme in this species is believed to be plastoquinone. Couples the redox reaction to proton translocation, and thus conserves the redox energy in a proton gradient. The sequence is that of NAD(P)H-quinone oxidoreductase subunit 2 B, chloroplastic from Liriodendron tulipifera (Tuliptree).